The chain runs to 128 residues: RxLR effector protein SFI2 (128 aa).

A signal peptide spans 1-22; sequence MRSAFYIFLVVAVLARCSVVAA. The RxLR-dEER signature appears at 52–71; it reads RLLRVAGREDDDATTDEEDR.

Belongs to the RxLR effector family.

The protein localises to the secreted. Its subcellular location is the host nucleus. Effector that suppresses flg22-induced post-translational MAP kinase activation both tomato and Arabidopsis. The perception of highly conserved pathogen- or microbe-associated molecular patterns (PAMPs/MAMPs), such as flg22, triggers converging signaling pathways recruiting MAP kinase cascades and inducing transcriptional re-programming, yielding a generic antimicrobial response. The chain is RxLR effector protein SFI2 from Phytophthora infestans (strain T30-4) (Potato late blight agent).